A 219-amino-acid chain; its full sequence is Large ribosomal subunit protein bL25 (219 aa).

A disordered region spans residues 176–219; it reads VTVVPPTDEPSEEEVEAMEGESATEEPEVVDEDKEDDEEENKED. The segment covering 184–219 has biased composition (acidic residues); the sequence is EPSEEEVEAMEGESATEEPEVVDEDKEDDEEENKED.

It belongs to the bacterial ribosomal protein bL25 family. CTC subfamily. In terms of assembly, part of the 50S ribosomal subunit; part of the 5S rRNA/L5/L18/L25 subcomplex. Contacts the 5S rRNA. Binds to the 5S rRNA independently of L5 and L18.

This is one of the proteins that binds to the 5S RNA in the ribosome where it forms part of the central protuberance. The protein is Large ribosomal subunit protein bL25 of Staphylococcus epidermidis (strain ATCC 12228 / FDA PCI 1200).